The following is a 125-amino-acid chain: Small ribosomal subunit protein uS12m (125 aa).

2 disordered regions span residues 1 to 29 and 105 to 125; these read MPTK…QCPQ and LGIP…PKSK. The span at 10 to 23 shows a compositional bias: basic and acidic residues; sequence HGREEKQRTDRTRA.

It belongs to the universal ribosomal protein uS12 family.

Its subcellular location is the mitochondrion. Functionally, protein S12 is involved in the translation initiation step. This chain is Small ribosomal subunit protein uS12m (RPS12), found in Oryza sativa subsp. japonica (Rice).